The sequence spans 202 residues: Imidazoleglycerol-phosphate dehydratase (202 aa).

This sequence belongs to the imidazoleglycerol-phosphate dehydratase family. Homotrimer.

The catalysed reaction is D-erythro-1-(imidazol-4-yl)glycerol 3-phosphate = 3-(imidazol-4-yl)-2-oxopropyl phosphate + H2O. It participates in amino-acid biosynthesis; L-histidine biosynthesis; L-histidine from 5-phospho-alpha-D-ribose 1-diphosphate: step 6/9. The polypeptide is Imidazoleglycerol-phosphate dehydratase (HIS3) (Cryptococcus neoformans var. neoformans serotype D (strain B-3501A) (Filobasidiella neoformans)).